The following is a 124-amino-acid chain: Large ribosomal subunit protein uL29 (124 aa).

The protein belongs to the universal ribosomal protein uL29 family.

This is Large ribosomal subunit protein uL29 (RPL35) from Triticum aestivum (Wheat).